Consider the following 371-residue polypeptide: tRNA-specific 2-thiouridylase MnmA (371 aa).

ATP contacts are provided by residues 13–20 (GMSGGVDS) and M39. The interaction with target base in tRNA stretch occupies residues 99-101 (NPD). The active-site Nucleophile is C104. A disulfide bridge connects residues C104 and C200. G128 contacts ATP. The interaction with tRNA stretch occupies residues 150-152 (KDQ). C200 (cysteine persulfide intermediate) is an active-site residue. An interaction with tRNA region spans residues 308–309 (RY).

It belongs to the MnmA/TRMU family.

The protein resides in the cytoplasm. The catalysed reaction is S-sulfanyl-L-cysteinyl-[protein] + uridine(34) in tRNA + AH2 + ATP = 2-thiouridine(34) in tRNA + L-cysteinyl-[protein] + A + AMP + diphosphate + H(+). Catalyzes the 2-thiolation of uridine at the wobble position (U34) of tRNA, leading to the formation of s(2)U34. The protein is tRNA-specific 2-thiouridylase MnmA of Bacillus mycoides (strain KBAB4) (Bacillus weihenstephanensis).